The primary structure comprises 191 residues: MSGDNPVGRLVVLAGPSAVGKSTVVHRLREEIEDLYFSVSMTTRAPRPGERDGVDYFFVSPEEFQSKIDAGEMLEWADIHGGLQRSGTPAGPVEAALLAGRPVLVEVDLVGARNVASLKPESETVFLAPPSWEVLVERLTGRGTEPEDVITRRLETAKNELTAQHEFKHVVVNEDVEKAVSDIKEILVGRR.

Positions 8-188 constitute a Guanylate kinase-like domain; the sequence is GRLVVLAGPS…AVSDIKEILV (181 aa). 15–22 is an ATP binding site; that stretch reads GPSAVGKS.

The protein belongs to the guanylate kinase family.

It localises to the cytoplasm. It catalyses the reaction GMP + ATP = GDP + ADP. Its function is as follows. Essential for recycling GMP and indirectly, cGMP. The polypeptide is Guanylate kinase (Corynebacterium diphtheriae (strain ATCC 700971 / NCTC 13129 / Biotype gravis)).